We begin with the raw amino-acid sequence, 288 residues long: Nucleotide-binding protein AHA_3920 (288 aa).

8-15 (GRSGSGKT) contacts ATP. Residue 56 to 59 (DVRN) participates in GTP binding.

This sequence belongs to the RapZ-like family.

Functionally, displays ATPase and GTPase activities. The sequence is that of Nucleotide-binding protein AHA_3920 from Aeromonas hydrophila subsp. hydrophila (strain ATCC 7966 / DSM 30187 / BCRC 13018 / CCUG 14551 / JCM 1027 / KCTC 2358 / NCIMB 9240 / NCTC 8049).